Reading from the N-terminus, the 281-residue chain is 2-dehydro-3-deoxyphosphooctonate aldolase (281 aa).

The protein belongs to the KdsA family.

It localises to the cytoplasm. It catalyses the reaction D-arabinose 5-phosphate + phosphoenolpyruvate + H2O = 3-deoxy-alpha-D-manno-2-octulosonate-8-phosphate + phosphate. The protein operates within carbohydrate biosynthesis; 3-deoxy-D-manno-octulosonate biosynthesis; 3-deoxy-D-manno-octulosonate from D-ribulose 5-phosphate: step 2/3. It functions in the pathway bacterial outer membrane biogenesis; lipopolysaccharide biosynthesis. The sequence is that of 2-dehydro-3-deoxyphosphooctonate aldolase from Pseudomonas paraeruginosa (strain DSM 24068 / PA7) (Pseudomonas aeruginosa (strain PA7)).